We begin with the raw amino-acid sequence, 453 residues long: Protein amnionless (453 aa).

A signal peptide spans 1-19 (MGVLGRVLLWLQLCALTQA). At 20–357 (VSKLWVPNTD…ESGAHVWGSS (338 aa)) the chain is on the extracellular side. The N-linked (GlcNAc...) asparagine glycan is linked to N35. Disulfide bonds link C43/C96, C137/C213, C205/C211, C223/C249, C234/C250, and C239/C253. The interval 67-87 (SDMLLPLDGELVLASGAGFGV) is interaction with CUBN. Positions 202–254 (PEDCADPSGCVCGNAEAQPWICAALLQPLGGRCPQAACHSALRPQGQCCDLCG) constitute a VWFC domain. The chain crosses the membrane as a helical span at residues 358–378 (AAGLAGGVAAAVLLALLVLLV). Residues 379 to 453 (APPLLRRAGR…PLFAGAEAEA (75 aa)) are Cytoplasmic-facing.

Interacts (via extracellular region) with CUBN/cubilin, giving rise to a huge complex containing one AMN chain and three CUBN chains. In terms of processing, N-glycosylated. A soluble form arises by proteolytic removal of the membrane anchor. As to expression, detected in proximal tubules in the kidney cortex (at protein level). Long isoforms are highly expressed in small intestine, colon and kidney (renal proximal tubule epithelial cells). Shorter isoforms are detected at lower levels in testis, thymus and peripheral blood leukocytes.

It is found in the apical cell membrane. The protein resides in the cell membrane. The protein localises to the endosome membrane. Its subcellular location is the membrane. It localises to the coated pit. It is found in the secreted. Its function is as follows. Membrane-bound component of the endocytic receptor formed by AMN and CUBN. Required for normal CUBN glycosylation and trafficking to the cell surface. The complex formed by AMN and CUBN is required for efficient absorption of vitamin B12. Required for normal CUBN-mediated protein transport in the kidney. This is Protein amnionless (AMN) from Homo sapiens (Human).